Consider the following 246-residue polypeptide: Phosphomannomutase 2 (246 aa).

Residue Ala-2 is modified to N-acetylalanine. Catalysis depends on Asp-12, which acts as the Nucleophile. Residues Asp-12 and Asp-14 each coordinate Mg(2+). Asp-14 (proton donor/acceptor) is an active-site residue. Positions 21, 123, 134, and 141 each coordinate alpha-D-mannose 1-phosphate. Lys-149 bears the N6-acetyllysine mark. 2 residues coordinate alpha-D-mannose 1-phosphate: Ser-179 and Asp-181. Residues Asp-209, Phe-221, Asp-223, and Thr-226 each contribute to the Mg(2+) site.

It belongs to the eukaryotic PMM family. As to quaternary structure, homodimer.

It localises to the cytoplasm. It carries out the reaction alpha-D-mannose 1-phosphate = D-mannose 6-phosphate. It functions in the pathway nucleotide-sugar biosynthesis; GDP-alpha-D-mannose biosynthesis; alpha-D-mannose 1-phosphate from D-fructose 6-phosphate: step 2/2. Involved in the synthesis of the GDP-mannose and dolichol-phosphate-mannose required for a number of critical mannosyl transfer reactions. The protein is Phosphomannomutase 2 (PMM2) of Homo sapiens (Human).